We begin with the raw amino-acid sequence, 428 residues long: Serine--tRNA ligase (428 aa).

Residue 236-238 (TAE) participates in L-serine binding. An ATP-binding site is contributed by 267–269 (RSE). Glu-290 is an L-serine binding site. Residue 354-357 (EISS) coordinates ATP. Ser-388 is a binding site for L-serine.

The protein belongs to the class-II aminoacyl-tRNA synthetase family. Type-1 seryl-tRNA synthetase subfamily. Homodimer. The tRNA molecule binds across the dimer.

It localises to the cytoplasm. It carries out the reaction tRNA(Ser) + L-serine + ATP = L-seryl-tRNA(Ser) + AMP + diphosphate + H(+). It catalyses the reaction tRNA(Sec) + L-serine + ATP = L-seryl-tRNA(Sec) + AMP + diphosphate + H(+). It functions in the pathway aminoacyl-tRNA biosynthesis; selenocysteinyl-tRNA(Sec) biosynthesis; L-seryl-tRNA(Sec) from L-serine and tRNA(Sec): step 1/1. Its function is as follows. Catalyzes the attachment of serine to tRNA(Ser). Is also able to aminoacylate tRNA(Sec) with serine, to form the misacylated tRNA L-seryl-tRNA(Sec), which will be further converted into selenocysteinyl-tRNA(Sec). This Psychrobacter cryohalolentis (strain ATCC BAA-1226 / DSM 17306 / VKM B-2378 / K5) protein is Serine--tRNA ligase.